We begin with the raw amino-acid sequence, 465 residues long: MSASLARGILSKMGGSCCPHHAPATNPFKLAKLHGNNKSTDYAFEMVCSTLRFGKGVTLEIGYDVRNLGAKKTLLITDKNVQNTIAFKNAEQALKMVNIEYEVFDDVLIEPTVNSMQKAIAFAKSKQFDSFIAVGGGSVIDTTKAAALYASNPEADFLDFVGPPFGKSMQPKNPMLPLIAVPTTAGTGSETTAAAIMDLPEHKCKTGIRLRCIKPYLAVVDPLNVMSMPRNVAIYSGFDVLCHALESFTALPFDQRSPRPENPGVRPLYQGSNPISDVWSKEALRIIGKYFRRSIFDPTDEEARTEMLKASSFAGIGFGNAGVHLCHGLSYPISSQAKSCVADDYPKEKNLIPHGLSVMTTAVADFEFTTAACPDRHLISAQTLGADIPNNASNEYISRTLCDRLRGYMRDFGVPNGLKGMGFEFSDIEMLTEAASHSVPNIAISPKSADREIISTLYEKSLTVY.

Belongs to the iron-containing alcohol dehydrogenase family. Hydroxyacid-oxoacid transhydrogenase subfamily.

It is found in the mitochondrion. The enzyme catalyses (S)-3-hydroxybutanoate + 2-oxoglutarate = (R)-2-hydroxyglutarate + acetoacetate. The catalysed reaction is 4-hydroxybutanoate + 2-oxoglutarate = (R)-2-hydroxyglutarate + succinate semialdehyde. Functionally, catalyzes the cofactor-independent reversible oxidation of gamma-hydroxybutyrate (GHB) to succinic semialdehyde (SSA) coupled to reduction of 2-ketoglutarate (2-KG) to D-2-hydroxyglutarate (D-2-HG). L-3-hydroxybutyrate (L-3-OHB) is also a substrate for HOT when using 2-KG as hydrogen acceptor, resulting in the formation of D-2-HG. This chain is Hydroxyacid-oxoacid transhydrogenase, mitochondrial, found in Caenorhabditis elegans.